We begin with the raw amino-acid sequence, 534 residues long: SWI/SNF complex component SNF12 homolog (534 aa).

Positions 1-12 are enriched in polar residues; that stretch reads MSGNNNNPQKPQ. 2 disordered regions span residues 1–33 and 78–132; these read MSGN…PGNQ and MTMN…SPMR. Residues 94 to 105 show a composition bias toward low complexity; that stretch reads PSSPSLTTPGSL. Residues 314–391 form the SWIB/MDM2 domain; that stretch reads YVPEKFKLST…SQKISHHLSP (78 aa).

It belongs to the SMARCD family. Part of a SWI-SNF complex.

Its subcellular location is the nucleus. Functionally, involved in transcriptional activation and repression of select genes by chromatin remodeling (alteration of DNA-nucleosome topology). This is SWI/SNF complex component SNF12 homolog from Arabidopsis thaliana (Mouse-ear cress).